Reading from the N-terminus, the 462-residue chain is Aquaporin-1 (462 aa).

The span at 1-11 (MTMRSPLTNDH) shows a compositional bias: polar residues. Positions 1–24 (MTMRSPLTNDHPQPLRASPLSEHD) are disordered. Over 1-146 (MTMRSPLTND…KWMNSDWKNH (146 aa)) the chain is Cytoplasmic. A helical transmembrane segment spans residues 147–167 (IVAVIGELIGTSLFLFFGYAG). Over 168 to 182 (IEVAKLQGREPPDLE) the chain is Extracellular. A helical membrane pass occupies residues 183 to 203 (VLFYISATFGASLMVTAWIFF). Over 204-229 (RISGGLFNPAVTLALAILKAVSPIRA) the chain is Cytoplasmic. The short motif at 211–213 (NPA) is the NPA 1 element. Residues 230–250 (FLLVITQLGASCLAAILVQEI) form a helical membrane-spanning segment. Over 251 to 269 (FPKQLDVATTLGSGTSMGQ) the chain is Extracellular. A helical transmembrane segment spans residues 270-290 (GFVIEAITTAALIFTIIMLAV). Residues 291–296 (EKHKAT) lie on the Cytoplasmic side of the membrane. Residues 297–317 (FVAPIGIGLALFVAHMVAVPF) traverse the membrane as a helical segment. Residues 318–341 (TGASLNPARSFGPSAIVWNFPREH) lie on the Extracellular side of the membrane. Positions 323–325 (NPA) match the NPA 2 motif. The chain crosses the membrane as a helical span at residues 342–362 (WIYWVGPILGAGLAVLFFRLI). At 363 to 462 (KLMEYEMANP…WRRQQYRNVV (100 aa)) the chain is on the cytoplasmic side. A disordered region spans residues 407-433 (GKSWYRDDSSSGSMRRKESVNSFTGGR). A compositionally biased stretch (basic and acidic residues) spans 410–425 (WYRDDSSSGSMRRKES).

The protein belongs to the MIP/aquaporin (TC 1.A.8) family.

The protein resides in the membrane. It carries out the reaction H2O(in) = H2O(out). In terms of biological role, water channel required to facilitate the transport of water across membranes. Involved in conidiation. The sequence is that of Aquaporin-1 from Botryotinia fuckeliana (strain B05.10) (Noble rot fungus).